Consider the following 207-residue polypeptide: Guanylate kinase (207 aa).

Residues 4-184 enclose the Guanylate kinase-like domain; the sequence is GTLYIVSAPS…ALSDLKTIIR (181 aa). Residue 11–18 coordinates ATP; sequence APSGAGKS.

This sequence belongs to the guanylate kinase family.

It is found in the cytoplasm. The catalysed reaction is GMP + ATP = GDP + ADP. Essential for recycling GMP and indirectly, cGMP. The polypeptide is Guanylate kinase (Salmonella paratyphi A (strain ATCC 9150 / SARB42)).